A 553-amino-acid chain; its full sequence is Zinc finger protein 426 (553 aa).

Residues 40-111 form the KRAB domain; that stretch reads VSFDDVIVDF…KIVFPEWKIQ (72 aa). 11 C2H2-type zinc fingers span residues 222–244, 277–299, 305–327, 333–355, 361–383, 389–411, 417–439, 445–467, 473–495, 501–525, and 531–553; these read FECS…QRTH, HRCK…MRTH, YECK…GRTH, YVCN…VRSH, YACK…IRTH, FVCV…LKMH, CECK…MRTH, YTCK…MRIH, YECK…ERTH, YECK…SHTH, and YKCQ…ERIH.

The protein resides in the nucleus. Its function is as follows. May be involved in transcriptional regulation. This Rattus norvegicus (Rat) protein is Zinc finger protein 426 (Znf426).